The following is a 130-amino-acid chain: Hypocretin neuropeptide precursor (130 aa).

An N-terminal signal peptide occupies residues 1–32; the sequence is MNPPSTKVPWAAVTLLLLLLLPPALLSPGAAA. At Gln33 the chain carries Pyrrolidone carboxylic acid. 2 cysteine pairs are disulfide-bonded: Cys38-Cys44 and Cys39-Cys46. Leu65 carries the post-translational modification Leucine amide. Met96 carries the post-translational modification Methionine amide. The propeptide at 97–130 is removed in mature form; the sequence is GRRAGAEPAPRPCPGRRCPVVAVPSAAPGGRSGV.

This sequence belongs to the orexin family. In terms of processing, specific enzymatic cleavages at paired basic residues yield the different active peptides.

The protein localises to the rough endoplasmic reticulum. It is found in the cytoplasmic vesicle. The protein resides in the synapse. Neuropeptides that play a significant role in the regulation of food intake and sleep-wakefulness, possibly by coordinating the complex behavioral and physiologic responses of these complementary homeostatic functions. A broader role in the homeostatic regulation of energy metabolism, autonomic function, hormonal balance and the regulation of body fluids, is also suggested. Its function is as follows. Binds to orexin receptors HCRTR1/OX1R and HCRTR2/OX2R with a high affinity. Stimulates food intake. Modulates pituitary luteinizing hormone secretion in an ovarian steroid-dependent manner. Functionally, binds to orexin receptor HCRTR2/OX2R only. Stimulates food intake. Modulates pituitary luteinizing hormone secretion in an ovarian steroid-dependent manner. The chain is Hypocretin neuropeptide precursor (HCRT) from Canis lupus familiaris (Dog).